The following is a 406-amino-acid chain: MTSSISWGLLLLAGLCCLVPSFLAEDAEKTDSSHQDHIMASNLADFAFGLYRVLSHQSNTTNIFLSPLSIATALAMLSLGSKDDTKAQLLQGLHFNLTETSEADIHKGFQHLLKTLNRPDNELQLTTGSSLFVNNSLNLVEKFLEEVKNHYHSEAFFVNFADSEEAKKTINSFVEKATHGKIVDLVKDLEIDTVLALVNYIFFRGKWEKPFDPELTEEADFHVDKSTTVKVPMMNRMGMFDVHYCDTLSSWVLLMDYLGNATAIFILPDEGKMQHLEQTLTKEHIYKFLQNRHTRSANVHLPKLSISGTYNLKKVLSPLGITQVFSNGADLSGITTDVPLKLSKAVHKAVLTLDERGTEAAGTTVLEAVPMSIPPDVCFKNPFVVIICDKHTQSPLFVGKVVNPTQ.

An N-terminal signal peptide occupies residues 1 to 24 (MTSSISWGLLLLAGLCCLVPSFLA). S33 bears the Phosphoserine mark. Residues N59, N96, and N260 are each glycosylated (N-linked (GlcNAc...) asparagine). The tract at residues 362–381 (GTTVLEAVPMSIPPDVCFKN) is RCL. Position 372 is a phosphoserine (S372).

This sequence belongs to the serpin family. As to quaternary structure, interacts with CELA2A. Interacts with ERGIC3 and LMAN1/ERGIC53. Interacts with PRSS1/Trypsin. Plasma.

Its subcellular location is the secreted. Functionally, inhibitor of serine proteases. Can inhibit elastase, trypsin, chymotrypsin and plasmin. This Meriones unguiculatus (Mongolian jird) protein is Alpha-1-antitrypsin.